The sequence spans 499 residues: Glycerol kinase (499 aa).

T12 is a binding site for ADP. 3 residues coordinate ATP: T12, T13, and S14. Residue T12 coordinates sn-glycerol 3-phosphate. ADP is bound at residue R16. The sn-glycerol 3-phosphate site is built by R82, E83, Y134, and D243. Glycerol contacts are provided by R82, E83, Y134, D243, and Q244. 2 residues coordinate ADP: T265 and G308. T265, G308, Q312, and G411 together coordinate ATP. G411 lines the ADP pocket.

It belongs to the FGGY kinase family.

It catalyses the reaction glycerol + ATP = sn-glycerol 3-phosphate + ADP + H(+). The protein operates within polyol metabolism; glycerol degradation via glycerol kinase pathway; sn-glycerol 3-phosphate from glycerol: step 1/1. Its activity is regulated as follows. Inhibited by fructose 1,6-bisphosphate (FBP). Key enzyme in the regulation of glycerol uptake and metabolism. Catalyzes the phosphorylation of glycerol to yield sn-glycerol 3-phosphate. The sequence is that of Glycerol kinase from Agrobacterium fabrum (strain C58 / ATCC 33970) (Agrobacterium tumefaciens (strain C58)).